Here is a 229-residue protein sequence, read N- to C-terminus: Octanoyltransferase (229 aa).

One can recognise a BPL/LPL catalytic domain in the interval 47–225 (PSSPEAVWIL…SLAARFHLAW (179 aa)). Substrate-binding positions include 89-96 (RGGEVTHH), 156-158 (AIG), and 169-171 (GLA). The active-site Acyl-thioester intermediate is the Cys-187.

The protein belongs to the LipB family.

It localises to the cytoplasm. The enzyme catalyses octanoyl-[ACP] + L-lysyl-[protein] = N(6)-octanoyl-L-lysyl-[protein] + holo-[ACP] + H(+). The protein operates within protein modification; protein lipoylation via endogenous pathway; protein N(6)-(lipoyl)lysine from octanoyl-[acyl-carrier-protein]: step 1/2. Its function is as follows. Catalyzes the transfer of endogenously produced octanoic acid from octanoyl-acyl-carrier-protein onto the lipoyl domains of lipoate-dependent enzymes. Lipoyl-ACP can also act as a substrate although octanoyl-ACP is likely to be the physiological substrate. The chain is Octanoyltransferase from Synechococcus sp. (strain CC9902).